A 131-amino-acid polypeptide reads, in one-letter code: Glycine cleavage system H protein (131 aa).

Residues T24–K106 enclose the Lipoyl-binding domain. K65 carries the post-translational modification N6-lipoyllysine.

The protein belongs to the GcvH family. The glycine cleavage system is composed of four proteins: P, T, L and H. (R)-lipoate serves as cofactor.

Its function is as follows. The glycine cleavage system catalyzes the degradation of glycine. The H protein shuttles the methylamine group of glycine from the P protein to the T protein. This Chromohalobacter salexigens (strain ATCC BAA-138 / DSM 3043 / CIP 106854 / NCIMB 13768 / 1H11) protein is Glycine cleavage system H protein.